Reading from the N-terminus, the 824-residue chain is A-adding tRNA nucleotidyltransferase (824 aa).

2 CBS domains span residues 305–363 (MNTP…DEPI) and 367–423 (VNRD…LEKL). An ATP-binding site is contributed by 459–462 (GVVR). D472 and D474 together coordinate Mg(2+). ATP is bound by residues 545 to 546 (RD), N550, 590 to 599 (DPVRILRALR), R603, and R632.

This sequence belongs to the tRNA nucleotidyltransferase/poly(A) polymerase family. Requires Mg(2+) as cofactor.

The enzyme catalyses a tRNA with a 3' CC end + ATP = a tRNA with a 3' CCA end + diphosphate. TRNA nucleotidyltransferase involved in the synthesis of the tRNA CCA terminus. Adds the terminal adenosine residue to tRNA. Can incorporate CMP into tRNA ending with C74C75 (tRNACC), with very weak efficiency. The protein is A-adding tRNA nucleotidyltransferase of Aquifex aeolicus (strain VF5).